The chain runs to 102 residues: Nucleoid-associated protein BCc_301 (102 aa).

Belongs to the YbaB/EbfC family. Homodimer.

The protein localises to the cytoplasm. The protein resides in the nucleoid. Binds to DNA and alters its conformation. May be involved in regulation of gene expression, nucleoid organization and DNA protection. This Buchnera aphidicola subsp. Cinara cedri (strain Cc) protein is Nucleoid-associated protein BCc_301.